Reading from the N-terminus, the 284-residue chain is Bifunctional protein FolD (284 aa).

Residues 166 to 168 and serine 191 each bind NADP(+); that span reads GRS.

It belongs to the tetrahydrofolate dehydrogenase/cyclohydrolase family. Homodimer.

It catalyses the reaction (6R)-5,10-methylene-5,6,7,8-tetrahydrofolate + NADP(+) = (6R)-5,10-methenyltetrahydrofolate + NADPH. The catalysed reaction is (6R)-5,10-methenyltetrahydrofolate + H2O = (6R)-10-formyltetrahydrofolate + H(+). It participates in one-carbon metabolism; tetrahydrofolate interconversion. In terms of biological role, catalyzes the oxidation of 5,10-methylenetetrahydrofolate to 5,10-methenyltetrahydrofolate and then the hydrolysis of 5,10-methenyltetrahydrofolate to 10-formyltetrahydrofolate. The protein is Bifunctional protein FolD of Leptospira borgpetersenii serovar Hardjo-bovis (strain JB197).